Consider the following 300-residue polypeptide: 33 kDa chaperonin (300 aa).

Cystine bridges form between C235/C237 and C269/C272.

The protein belongs to the HSP33 family. Post-translationally, under oxidizing conditions two disulfide bonds are formed involving the reactive cysteines. Under reducing conditions zinc is bound to the reactive cysteines and the protein is inactive.

It localises to the cytoplasm. Redox regulated molecular chaperone. Protects both thermally unfolding and oxidatively damaged proteins from irreversible aggregation. Plays an important role in the bacterial defense system toward oxidative stress. In Pseudomonas fluorescens (strain Pf0-1), this protein is 33 kDa chaperonin.